The primary structure comprises 297 residues: ATP synthase F(1) complex subunit gamma, mitochondrial (297 aa).

The N-terminal 25 residues, Met-1–Met-25, are a transit peptide targeting the mitochondrion. Lys-39 bears the N6-acetyllysine mark. Lys-49 carries the N6-succinyllysine modification. At Lys-55 the chain carries N6-acetyllysine. Lys-115 is subject to N6-acetyllysine; alternate. At Lys-115 the chain carries N6-succinyllysine; alternate. Phosphoserine is present on Ser-146. Lys-154 carries the N6-acetyllysine; alternate modification. Lys-154 is subject to N6-succinyllysine; alternate. The residue at position 197 (Lys-197) is an N6-acetyllysine. Lys-270 is subject to N6-succinyllysine.

It belongs to the ATPase gamma chain family. In terms of assembly, component of the ATP synthase complex composed at least of ATP5F1A/subunit alpha, ATP5F1B/subunit beta, ATP5MC1/subunit c (homooctomer), MT-ATP6/subunit a, MT-ATP8/subunit 8, ATP5ME/subunit e, ATP5MF/subunit f, ATP5MG/subunit g, ATP5MK/subunit k, ATP5MJ/subunit j, ATP5F1C/subunit gamma, ATP5F1D/subunit delta, ATP5F1E/subunit epsilon, ATP5PF/subunit F6, ATP5PB/subunit b, ATP5PD/subunit d, ATP5PO/subunit OSCP. ATP synthase complex consists of a soluble F(1) head domain (subunits alpha(3) and beta(3)) - the catalytic core - and a membrane F(0) domain - the membrane proton channel (subunits c, a, 8, e, f, g, k and j). These two domains are linked by a central stalk (subunits gamma, delta, and epsilon) rotating inside the F1 region and a stationary peripheral stalk (subunits F6, b, d, and OSCP). Interacts with FLVCR2; this interaction occurs in the absence of heme and is disrupted upon heme binding.

Its subcellular location is the mitochondrion inner membrane. Functionally, subunit gamma, of the mitochondrial membrane ATP synthase complex (F(1)F(0) ATP synthase or Complex V) that produces ATP from ADP in the presence of a proton gradient across the membrane which is generated by electron transport complexes of the respiratory chain. ATP synthase complex consist of a soluble F(1) head domain - the catalytic core - and a membrane F(1) domain - the membrane proton channel. These two domains are linked by a central stalk rotating inside the F(1) region and a stationary peripheral stalk. During catalysis, ATP synthesis in the catalytic domain of F(1) is coupled via a rotary mechanism of the central stalk subunits to proton translocation. In vivo, can only synthesize ATP although its ATP hydrolase activity can be activated artificially in vitro. With the central stalk subunit delta, is essential for the biogenesis of F(1) catalytic part of the ATP synthase complex namely in the formation of F1 assembly intermediate. In Pongo abelii (Sumatran orangutan), this protein is ATP synthase F(1) complex subunit gamma, mitochondrial.